A 393-amino-acid polypeptide reads, in one-letter code: Staphopain B (393 aa).

Residues 1–36 (MNSSCKTRVFNIISIIMVSMLILSLGAFANNNKAKA) form the signal peptide. Residues 37-219 (DSHSKQLEIN…KVEENEAIQE (183 aa)) constitute a propeptide that is removed on maturation. Active-site residues include cysteine 243, histidine 340, and asparagine 360.

The protein belongs to the peptidase C47 family. As to quaternary structure, in the cytoplasm, prematurely activated/folded SspB forms a stable non-covalent complex with SspC. Post-translationally, proteolytically cleaved by staphylococcal serine protease (SspA).

Its subcellular location is the secreted. Its activity is regulated as follows. Prematurely activated/folded staphopain B is inhibited by staphostatin B (SspC), which is probably required to protect staphylococcal cytoplasmic proteins from degradation by SspB. In terms of biological role, cysteine protease that plays an important role in the inhibition of host innate immune response. Degrades host elastin, fibrogen, fibronectin and kininogen. Blocks phagocytosis of opsonised S.aureus by neutrophils and monocytes by inducing their death in a proteolytic activity-dependent manner. Decreases surface expression of the 'don't eat me' signal CD31 on neutrophils. Cleaves host galectin-3/LGALS3, thereby inhibiting the neutrophil-activating ability of the lectin. This is Staphopain B (sspB) from Staphylococcus aureus (strain MRSA252).